A 395-amino-acid polypeptide reads, in one-letter code: Chorismate synthase (395 aa).

NADP(+)-binding residues include arginine 40 and arginine 46. Residues 135-137 (RAS) and 256-257 (QA) contribute to the FMN site. The span at 272 to 283 (RRGSQAHDEMRP) shows a compositional bias: basic and acidic residues. The segment at 272–296 (RRGSQAHDEMRPGPDGILRSTNRAG) is disordered. FMN contacts are provided by residues glycine 300, 315–319 (KPIST), and arginine 341.

Belongs to the chorismate synthase family. As to quaternary structure, homotetramer. FMNH2 serves as cofactor.

It catalyses the reaction 5-O-(1-carboxyvinyl)-3-phosphoshikimate = chorismate + phosphate. The protein operates within metabolic intermediate biosynthesis; chorismate biosynthesis; chorismate from D-erythrose 4-phosphate and phosphoenolpyruvate: step 7/7. In terms of biological role, catalyzes the anti-1,4-elimination of the C-3 phosphate and the C-6 proR hydrogen from 5-enolpyruvylshikimate-3-phosphate (EPSP) to yield chorismate, which is the branch point compound that serves as the starting substrate for the three terminal pathways of aromatic amino acid biosynthesis. This reaction introduces a second double bond into the aromatic ring system. This Rhodococcus opacus (strain B4) protein is Chorismate synthase.